A 140-amino-acid chain; its full sequence is ATP synthase epsilon chain (140 aa).

This sequence belongs to the ATPase epsilon chain family. As to quaternary structure, F-type ATPases have 2 components, CF(1) - the catalytic core - and CF(0) - the membrane proton channel. CF(1) has five subunits: alpha(3), beta(3), gamma(1), delta(1), epsilon(1). CF(0) has three main subunits: a, b and c.

It is found in the cell inner membrane. Produces ATP from ADP in the presence of a proton gradient across the membrane. The protein is ATP synthase epsilon chain of Xanthomonas oryzae pv. oryzae (strain MAFF 311018).